Consider the following 21-residue polypeptide: Protein YnfR (21 aa).

The polypeptide is Protein YnfR (Escherichia coli (strain K12)).